The sequence spans 290 residues: ATP synthase gamma chain (290 aa).

The protein belongs to the ATPase gamma chain family. In terms of assembly, F-type ATPases have 2 components, CF(1) - the catalytic core - and CF(0) - the membrane proton channel. CF(1) has five subunits: alpha(3), beta(3), gamma(1), delta(1), epsilon(1). CF(0) has three main subunits: a, b and c.

The protein resides in the cell membrane. Its function is as follows. Produces ATP from ADP in the presence of a proton gradient across the membrane. The gamma chain is believed to be important in regulating ATPase activity and the flow of protons through the CF(0) complex. In Listeria innocua serovar 6a (strain ATCC BAA-680 / CLIP 11262), this protein is ATP synthase gamma chain.